We begin with the raw amino-acid sequence, 376 residues long: Cyclin-D3-1 (376 aa).

Residues 298-376 (KRKSHDSSSS…HLPWAIVATP (79 aa)) form a disordered region. A compositionally biased stretch (low complexity) spans 321–349 (NSDESSNDSWSASSCNPPTSSSSPQQQPP). Residues 354–363 (RGAEENEKKK) show a composition bias toward basic and acidic residues.

It belongs to the cyclin family. Cyclin D subfamily. As to quaternary structure, interacts with the C-terminal domain of CDKA-1. Interacts with KRP1/ICK1. Interacts with KRP6. In terms of processing, phosphorylated. As to expression, highly expressed in roots and at lower levels in leaves and flowers. Expressed in vegetative shoot meristem and inflorescence.

Involved in the control of the cell cycle at the G1/S (start) transition. Activates the G1/S phase transition in response to cytokinin hormone signal, but declines in response to sucrose starvation leading to G1 arrest. Involved in the induction of mitotic cell division. Plays an important role in the switch from cell proliferation to the final stages of differentiation during plant development. May not be involved in the activation of cell cycle in the root apical meristem (RAM) in the early phase of seed germination. Promotes divisions in the guard cells (GCs) after the guard mother cells (GMC) symmetric division. The sequence is that of Cyclin-D3-1 (CYCD3-1) from Arabidopsis thaliana (Mouse-ear cress).